The following is a 397-amino-acid chain: Bifunctional enzyme IspD/IspF (397 aa).

Residues 1 to 236 form a 2-C-methyl-D-erythritol 4-phosphate cytidylyltransferase region; it reads MSIAAIILAA…LKGMQIFPDI (236 aa). Residues 237-397 are 2-C-methyl-D-erythritol 2,4-cyclodiphosphate synthase; that stretch reads RTGNGYDVHS…TVIYPGEIPK (161 aa). A divalent metal cation contacts are provided by D243 and H245. 4-CDP-2-C-methyl-D-erythritol 2-phosphate-binding positions include 243 to 245 and 269 to 270; these read DVH and HS. H277 is a binding site for a divalent metal cation. 4-CDP-2-C-methyl-D-erythritol 2-phosphate-binding positions include 291-293, 367-370, F374, and R377; these read DIG and TTNE.

It in the N-terminal section; belongs to the IspD/TarI cytidylyltransferase family. IspD subfamily. The protein in the C-terminal section; belongs to the IspF family. A divalent metal cation serves as cofactor.

The enzyme catalyses 2-C-methyl-D-erythritol 4-phosphate + CTP + H(+) = 4-CDP-2-C-methyl-D-erythritol + diphosphate. It catalyses the reaction 4-CDP-2-C-methyl-D-erythritol 2-phosphate = 2-C-methyl-D-erythritol 2,4-cyclic diphosphate + CMP. It participates in isoprenoid biosynthesis; isopentenyl diphosphate biosynthesis via DXP pathway; isopentenyl diphosphate from 1-deoxy-D-xylulose 5-phosphate: step 2/6. The protein operates within isoprenoid biosynthesis; isopentenyl diphosphate biosynthesis via DXP pathway; isopentenyl diphosphate from 1-deoxy-D-xylulose 5-phosphate: step 4/6. Bifunctional enzyme that catalyzes the formation of 4-diphosphocytidyl-2-C-methyl-D-erythritol from CTP and 2-C-methyl-D-erythritol 4-phosphate (MEP) (IspD), and catalyzes the conversion of 4-diphosphocytidyl-2-C-methyl-D-erythritol 2-phosphate (CDP-ME2P) to 2-C-methyl-D-erythritol 2,4-cyclodiphosphate (ME-CPP) with a corresponding release of cytidine 5-monophosphate (CMP) (IspF). In Bartonella bacilliformis (strain ATCC 35685 / KC583 / Herrer 020/F12,63), this protein is Bifunctional enzyme IspD/IspF.